The sequence spans 762 residues: N,N-dimethylformamidase beta subunit (762 aa).

In terms of assembly, heterotetramer of two DmfA1 (alpha) and two DmfA2 (beta) subunits.

It catalyses the reaction N,N-dimethylformamide + H2O = dimethylamine + formate. Functionally, hydrolyzes N,N-dimethylformamide, and to a lesser extent N,N-dimethylacetamide and N,N-diethylacetamide. Has no activity against the substituted amides N-methylformamide, N-ethylformamide, N-ethylformamide and N-methylacetamide or the unsubstituted amides formamide, nicotinamide, acetoamide, benzamide, acetamide and acrylamide. The protein is N,N-dimethylformamidase beta subunit of Paracoccus aminophilus.